Consider the following 754-residue polypeptide: Circadian input-output histidine kinase CikA (754 aa).

Positions 1–183 (MLAPSSNCSL…QVSAQIRLSL (183 aa)) are N-terminal domain, not required to complement the deletion strain. A GAF domain, required to complement the deletion strain region spans residues 184–338 (DLSEILTTTI…RDILQHLAEH (155 aa)). A Histidine kinase domain is found at 390-611 (TMSHELRTPL…TFTVWIPEQT (222 aa)). A Phosphohistidine; by autocatalysis modification is found at H393. The tract at residues 606-754 (WIPEQTLIEP…NLSEGDRPSS (149 aa)) is psR domain, required to complement the deletion strain and for cell pole localization, attenuates autophosphorylation activity. Binds KaiB(fs). The Response regulatory domain maps to 629 to 742 (HILLLEEEDE…LLLTTLQGLC (114 aa)).

It in the N-terminal section; belongs to the phytochrome family. Homodimer. Part of the circadian clock (KaiA, KaiB, KaiC, CikA, RpaA, SasA), the composition of which varies during the circadian cycle. Interacts with LdpA. KaiA and CikA compete for binding to KaiB(fs).

Its subcellular location is the cytoplasm. The protein resides in the membrane. The enzyme catalyses ATP + protein L-histidine = ADP + protein N-phospho-L-histidine.. Functionally, functions in an input pathway to the Kai circadian clock. Senses oxidized quinones via its C-terminal pseudo-receiver domain, providing a link between cell metabolism and the clock. Affects the ratio of phosphorylated to unphosphorylated KaiC, binds quinones via its pseudo-receptor domain. Quinone-binding destabilizes the protein rapidly. Autophosphorylates, does not transfer the phosphate to its pseudo-receiver (PsR) domain. May play a role in cell division, as suggested by its polar location and increased cell length in a deletion strain. Its function is as follows. Member of the two-component regulatory system CikA/RpaA output pathway from the circadian clock, negatively regulating kaiBC expression independently of labA and of sasA. One of three clock output pathways. Dephosphorylates phospho-RpaA, enhanced by KaiB and KaiC, has only modest kinase activity on RpaA. A very robust clock is reconstituted with KaiA, KaiB, KaiC, SasA, CikA and RpaA; output is measured by transcription from an appropriate reporter. The protein is Circadian input-output histidine kinase CikA of Synechococcus elongatus (strain ATCC 33912 / PCC 7942 / FACHB-805) (Anacystis nidulans R2).